Reading from the N-terminus, the 160-residue chain is Cyanate hydratase (160 aa).

Catalysis depends on residues arginine 100, glutamate 103, and serine 126.

The protein belongs to the cyanase family.

The catalysed reaction is cyanate + hydrogencarbonate + 3 H(+) = NH4(+) + 2 CO2. Its function is as follows. Catalyzes the reaction of cyanate with bicarbonate to produce ammonia and carbon dioxide. The polypeptide is Cyanate hydratase (Arthroderma otae (strain ATCC MYA-4605 / CBS 113480) (Microsporum canis)).